The following is a 361-amino-acid chain: G2/mitotic-specific cyclin-B1 (361 aa).

The segment covering 1 to 13 has biased composition (polar residues); it reads MLRATNNRRTSNN. The disordered stretch occupies residues 1–33; that stretch reads MLRATNNRRTSNNVEKDSLQMAKHGNGPLKPVN.

This sequence belongs to the cyclin family. Cyclin AB subfamily. In terms of assembly, interacts with the CDK1 protein kinase to form a serine/threonine kinase holoenzyme complex also known as maturation promoting factor (MPF). The cyclin subunit imparts substrate specificity to the complex. Interacts with E3 ubiquitin-protein ligase etc-1. Post-translationally, ubiquitinated by etc-1 likely during meiosis, resulting in its degradation.

The protein localises to the cytoplasm. In terms of biological role, essential for the control of the cell cycle at the G2/M (mitosis) transition. The chain is G2/mitotic-specific cyclin-B1 (cyb-1) from Caenorhabditis elegans.